Here is a 33-residue protein sequence, read N- to C-terminus: MSDIN-like toxin proprotein 1 (33 aa).

Positions 1-10 are excised as a propeptide; the sequence is MSDINATRLP. The segment at residues 11 to 18 is a cross-link (cyclopeptide (Ile-Pro)); sequence IIWAPVVP. Residues 19–33 constitute a propeptide that is removed on maturation; that stretch reads CISDDNDSTLTRGQR.

The protein belongs to the MSDIN fungal toxin family. Post-translationally, processed by the macrocyclase-peptidase enzyme POPB to yield a toxic cyclic octapeptide. POPB first removes 10 residues from the N-terminus. Conformational trapping of the remaining peptide forces the enzyme to release this intermediate rather than proceed to macrocyclization. The enzyme rebinds the remaining peptide in a different conformation and catalyzes macrocyclization of the N-terminal 8 residues.

Its function is as follows. Probable toxin that belongs to the MSDIN-like toxin family responsible for a large number of food poisoning cases and deaths. The chain is MSDIN-like toxin proprotein 1 from Amanita fuliginea (East Asian brown death cap).